A 200-amino-acid polypeptide reads, in one-letter code: Recombination protein RecR (200 aa).

Residues 57 to 72 form a C4-type zinc finger; that stretch reads CSECRTFTEEDTCAIC. A Toprim domain is found at 81–176; sequence GELCIVESPA…SASRIAHGVP (96 aa).

The protein belongs to the RecR family.

In terms of biological role, may play a role in DNA repair. It seems to be involved in an RecBC-independent recombinational process of DNA repair. It may act with RecF and RecO. This chain is Recombination protein RecR, found in Aliivibrio salmonicida (strain LFI1238) (Vibrio salmonicida (strain LFI1238)).